The following is an 880-amino-acid chain: Leucine--tRNA ligase (880 aa).

Positions Pro-49–His-59 match the 'HIGH' region motif. Positions Lys-638–Ser-642 match the 'KMSKS' region motif. Lys-641 lines the ATP pocket.

Belongs to the class-I aminoacyl-tRNA synthetase family.

It localises to the cytoplasm. The enzyme catalyses tRNA(Leu) + L-leucine + ATP = L-leucyl-tRNA(Leu) + AMP + diphosphate. This is Leucine--tRNA ligase from Bartonella quintana (strain Toulouse) (Rochalimaea quintana).